Here is a 389-residue protein sequence, read N- to C-terminus: Very-long-chain 3-oxoacyl-CoA reductase (389 aa).

A helical membrane pass occupies residues 34-54 (IAVFLLAIGLFHVALKVVSYV). The NADP(+) site is built by valine 80, aspartate 134, asparagine 162, tyrosine 239, lysine 243, valine 272, and serine 274. Tyrosine 239 acts as the Proton donor in catalysis. Lysine 243 acts as the Lowers pKa of active site Tyr in catalysis. The segment at 359–389 (QAAGGVADPKNTTAAREGYATESLKNETLKH) is disordered.

This sequence belongs to the short-chain dehydrogenases/reductases (SDR) family.

The protein resides in the endoplasmic reticulum membrane. The enzyme catalyses a very-long-chain (3R)-3-hydroxyacyl-CoA + NADP(+) = a very-long-chain 3-oxoacyl-CoA + NADPH + H(+). The protein operates within lipid metabolism; fatty acid biosynthesis. Component of the microsomal membrane bound fatty acid elongation system, which produces the 26-carbon very long-chain fatty acids (VLCFA) from palmitate. Catalyzes the reduction of the 3-ketoacyl-CoA intermediate that is formed in each cycle of fatty acid elongation. VLCFAs serve as precursors for ceramide and sphingolipids. In Yarrowia lipolytica (strain CLIB 122 / E 150) (Yeast), this protein is Very-long-chain 3-oxoacyl-CoA reductase.